The following is a 226-amino-acid chain: Protein B (226 aa).

The tract at residues 37–100 is igG constant region-binding; that stretch reads DNVQGTDYEK…FSTQHLANKV (64 aa). 3 repeats span residues 158–168, 169–179, and 180–190; these read TKSKLDKEIWN, TRFTRDKKVLN, and VKEFKVYNTLN.

It is found in the secreted. Functionally, protein B belongs to the group of bacterial Fc-binding protein. This is Protein B from Streptococcus agalactiae.